The sequence spans 163 residues: Putative 4-hydroxy-4-methyl-2-oxoglutarate aldolase (163 aa).

Substrate contacts are provided by residues 79–82 and Arg-101; that span reads GDQL. Asp-102 provides a ligand contact to a divalent metal cation.

Belongs to the class II aldolase/RraA-like family. As to quaternary structure, homotrimer. A divalent metal cation serves as cofactor.

The catalysed reaction is 4-hydroxy-4-methyl-2-oxoglutarate = 2 pyruvate. It carries out the reaction oxaloacetate + H(+) = pyruvate + CO2. In terms of biological role, catalyzes the aldol cleavage of 4-hydroxy-4-methyl-2-oxoglutarate (HMG) into 2 molecules of pyruvate. Also contains a secondary oxaloacetate (OAA) decarboxylase activity due to the common pyruvate enolate transition state formed following C-C bond cleavage in the retro-aldol and decarboxylation reactions. The protein is Putative 4-hydroxy-4-methyl-2-oxoglutarate aldolase of Dechloromonas aromatica (strain RCB).